The primary structure comprises 203 residues: Calcineurin B-like protein 5 (203 aa).

Gly2 is lipidated: N-myristoyl glycine. 4 EF-hand domains span residues 30 to 65 (EVEV…KNTK), 66 to 101 (KRSL…FHPN), 103 to 138 (SPRD…VLEE), and 147 to 182 (IIDS…YPLT).

The protein belongs to the calcineurin regulatory subunit family. As to quaternary structure, homodimer. Interacts with PP2CA, CIPK2, CIPK11, CIPK23 and CIPK24. Both N-myristoylation and calcium-mediated conformational changes are essential for its function. In terms of tissue distribution, expressed in green tissues, but not in the roots.

The protein localises to the cytoplasm. Its subcellular location is the nucleus. Its function is as follows. Acts as a calcium sensor. CBL proteins interact with CIPK serine-threonine protein kinases. Binding of a CBL protein to the regulatory NAF domain of a CIPK protein lead to the activation of the kinase in a calcium-dependent manner. May function as a positive regulator of salt or drought responses. In Arabidopsis thaliana (Mouse-ear cress), this protein is Calcineurin B-like protein 5 (CBL5).